We begin with the raw amino-acid sequence, 539 residues long: MSTARSDDDSWEITESVGATALGVASARAAETRSENPLIKDPFAQVFLDAAGDGVWNWHSAPQLPPELIEAEPTIPLQQQAMVGYMASRTAFFDSFFLEATGAGIRQAVILAAGLDARSWRLPWPAGTTVYELDQPRVLEFKESTLAEHGAQPACNRVAVPVDLRHDWPEALRQAGFDASAPSVWSAEGLMPYLPAAAQDLLFDRIQGLTVAGSRVAVEALGPKFLDPQARAKRRERMDRIQALMARIDPDRAVPRTDELWYFEEREDVGEWFGRHGWDVRVTPSDELMAGYGRGRRRPRSATSCRGTCSSPRSGGRPEGLAFRQGESRARRHRRDVAGQHGFGNQCGGPDCGSAQHRRAQVDHPAQQRGFSDDAPDAAPAERGEPGERGGQVVRLVDARGQHRGVLEPLATALTQVRAHRMSRVADHHDGPARPGPGGGAVVKVVAQHLVAGRRCQHPRNRFGPIGESCLQIGQFAARRELPFRSALGGEPIQAIRTHRHMAGFDAGTKCLAGQLGVHRRSPHRAMRCSRRTGRRAGR.

Residues D134 and 163–164 (DL) contribute to the S-adenosyl-L-methionine site. A disordered region spans residues 290–392 (AGYGRGRRRP…RGEPGERGGQ (103 aa)). Positions 301 to 313 (SATSCRGTCSSPR) are enriched in polar residues. Over residues 341–351 (HGFGNQCGGPD) the composition is skewed to gly residues.

This sequence belongs to the UPF0677 family.

Exhibits S-adenosyl-L-methionine-dependent methyltransferase activity. The protein is Putative S-adenosyl-L-methionine-dependent methyltransferase MAP_4079 of Mycolicibacterium paratuberculosis (strain ATCC BAA-968 / K-10) (Mycobacterium paratuberculosis).